We begin with the raw amino-acid sequence, 37 residues long: Cytochrome b6-f complex subunit 5 (37 aa).

Residues 5 to 25 (LLSGIVLGMIPVTLAGLFVTA) form a helical membrane-spanning segment.

It belongs to the PetG family. As to quaternary structure, the 4 large subunits of the cytochrome b6-f complex are cytochrome b6, subunit IV (17 kDa polypeptide, PetD), cytochrome f and the Rieske protein, while the 4 small subunits are PetG, PetL, PetM and PetN. The complex functions as a dimer.

It is found in the plastid. Its subcellular location is the chloroplast thylakoid membrane. Component of the cytochrome b6-f complex, which mediates electron transfer between photosystem II (PSII) and photosystem I (PSI), cyclic electron flow around PSI, and state transitions. PetG is required for either the stability or assembly of the cytochrome b6-f complex. The chain is Cytochrome b6-f complex subunit 5 from Staurastrum punctulatum (Green alga).